A 79-amino-acid polypeptide reads, in one-letter code: Acyl carrier protein (79 aa).

Residues 2–77 (DNIEQRVKKI…LAIDFAKSKA (76 aa)) form the Carrier domain. Position 37 is an O-(pantetheine 4'-phosphoryl)serine (serine 37).

This sequence belongs to the acyl carrier protein (ACP) family. 4'-phosphopantetheine is transferred from CoA to a specific serine of apo-ACP by AcpS. This modification is essential for activity because fatty acids are bound in thioester linkage to the sulfhydryl of the prosthetic group.

The protein localises to the cytoplasm. It participates in lipid metabolism; fatty acid biosynthesis. In terms of biological role, carrier of the growing fatty acid chain in fatty acid biosynthesis. This is Acyl carrier protein from Polynucleobacter necessarius subsp. necessarius (strain STIR1).